Reading from the N-terminus, the 498-residue chain is tRNA-2-methylthio-N(6)-dimethylallyladenosine synthase (498 aa).

The 117-residue stretch at 2–118 folds into the MTTase N-terminal domain; that stretch reads PRYSITTFGC…LPGLLGDLAI (117 aa). Residues Cys-11, Cys-47, Cys-81, Cys-163, Cys-167, and Cys-170 each contribute to the [4Fe-4S] cluster site. The Radical SAM core domain occupies 149-393; the sequence is PRAAPTAFVT…FEESEALLAA (245 aa). Residues 396-467 enclose the TRAM domain; that stretch reads SALVGTTQEV…KHSLQAELTE (72 aa). Residues 469 to 498 form a disordered region; sequence ARAAARPRQRGGLEPRPARRSLPVVAAEGG.

The protein belongs to the methylthiotransferase family. MiaB subfamily. In terms of assembly, monomer. [4Fe-4S] cluster is required as a cofactor.

The protein resides in the cytoplasm. It carries out the reaction N(6)-dimethylallyladenosine(37) in tRNA + (sulfur carrier)-SH + AH2 + 2 S-adenosyl-L-methionine = 2-methylsulfanyl-N(6)-dimethylallyladenosine(37) in tRNA + (sulfur carrier)-H + 5'-deoxyadenosine + L-methionine + A + S-adenosyl-L-homocysteine + 2 H(+). Its function is as follows. Catalyzes the methylthiolation of N6-(dimethylallyl)adenosine (i(6)A), leading to the formation of 2-methylthio-N6-(dimethylallyl)adenosine (ms(2)i(6)A) at position 37 in tRNAs that read codons beginning with uridine. This Sorangium cellulosum (strain So ce56) (Polyangium cellulosum (strain So ce56)) protein is tRNA-2-methylthio-N(6)-dimethylallyladenosine synthase.